A 431-amino-acid polypeptide reads, in one-letter code: 5-methylthioadenosine/S-adenosylhomocysteine deaminase (431 aa).

Zn(2+) is bound by residues H63 and H65. Residues E92, R144, and H184 each coordinate substrate. Zn(2+) is bound at residue H211. E214 and D299 together coordinate substrate. D299 serves as a coordination point for Zn(2+).

This sequence belongs to the metallo-dependent hydrolases superfamily. MTA/SAH deaminase family. It depends on Zn(2+) as a cofactor.

It catalyses the reaction S-adenosyl-L-homocysteine + H2O + H(+) = S-inosyl-L-homocysteine + NH4(+). The enzyme catalyses S-methyl-5'-thioadenosine + H2O + H(+) = S-methyl-5'-thioinosine + NH4(+). Functionally, catalyzes the deamination of 5-methylthioadenosine and S-adenosyl-L-homocysteine into 5-methylthioinosine and S-inosyl-L-homocysteine, respectively. Is also able to deaminate adenosine. This Thermoanaerobacter pseudethanolicus (strain ATCC 33223 / 39E) (Clostridium thermohydrosulfuricum) protein is 5-methylthioadenosine/S-adenosylhomocysteine deaminase.